Here is a 324-residue protein sequence, read N- to C-terminus: Olfactory receptor 4K15 (324 aa).

Over 1–25 the chain is Extracellular; it reads MNETNHSRVTEFVLLGLSSSRELQP. Asparagine 2 and asparagine 5 each carry an N-linked (GlcNAc...) asparagine glycan. A helical membrane pass occupies residues 26 to 49; the sequence is FLFLTFSLLYLAILLGNFLIILTV. At 50–57 the chain is on the cytoplasmic side; it reads TSDSRLHT. A helical membrane pass occupies residues 58-79; sequence PMYFLLANLSFIDVCVASFATP. The Extracellular portion of the chain corresponds to 80–100; sequence KMIADFLVERKTISFDACLAQ. Cysteine 97 and cysteine 189 form a disulfide bridge. The chain crosses the membrane as a helical span at residues 101–120; the sequence is IFFVHLFTGSEMVLLVSMAY. At 121–139 the chain is on the cytoplasmic side; the sequence is DRYVAICKPLHYMTVMSRR. The chain crosses the membrane as a helical span at residues 140–158; that stretch reads VCVVLVLISWFVGFIHTTS. At 159–195 the chain is on the extracellular side; that stretch reads QLAFTVNLPFCGPNKVDSFFCDLPLVTKLACIDTYVV. Residues 196–219 traverse the membrane as a helical segment; that stretch reads SLLIVADSGFLSLSSFLLLVVSYT. Topologically, residues 220-235 are cytoplasmic; it reads VILVTVRNRSSASMAK. The chain crosses the membrane as a helical span at residues 236–258; the sequence is ARSTLTAHITVVTLFFGPCIFIY. Over 259 to 269 the chain is Extracellular; the sequence is VWPFSSYSVDK. A helical transmembrane segment spans residues 270 to 289; the sequence is VLAVFYTIFTLILNPVIYTL. Residues 290–324 are Cytoplasmic-facing; it reads RNKEVKAAMSKLKSRYLKPSQVSVVIRNVLFLETK.

It belongs to the G-protein coupled receptor 1 family.

It localises to the cell membrane. In terms of biological role, odorant receptor. The chain is Olfactory receptor 4K15 (OR4K15) from Homo sapiens (Human).